The sequence spans 534 residues: Arginine--tRNA ligase (534 aa).

Residues 120-130 (ANPTGFLHLGH) carry the 'HIGH' region motif.

The protein belongs to the class-I aminoacyl-tRNA synthetase family. As to quaternary structure, monomer.

The protein localises to the cytoplasm. The enzyme catalyses tRNA(Arg) + L-arginine + ATP = L-arginyl-tRNA(Arg) + AMP + diphosphate. The polypeptide is Arginine--tRNA ligase (Mesomycoplasma hyopneumoniae (strain 7448) (Mycoplasma hyopneumoniae)).